A 95-amino-acid chain; its full sequence is Aspartyl/glutamyl-tRNA(Asn/Gln) amidotransferase subunit C (95 aa).

It belongs to the GatC family. In terms of assembly, heterotrimer of A, B and C subunits.

It carries out the reaction L-glutamyl-tRNA(Gln) + L-glutamine + ATP + H2O = L-glutaminyl-tRNA(Gln) + L-glutamate + ADP + phosphate + H(+). The catalysed reaction is L-aspartyl-tRNA(Asn) + L-glutamine + ATP + H2O = L-asparaginyl-tRNA(Asn) + L-glutamate + ADP + phosphate + 2 H(+). Functionally, allows the formation of correctly charged Asn-tRNA(Asn) or Gln-tRNA(Gln) through the transamidation of misacylated Asp-tRNA(Asn) or Glu-tRNA(Gln) in organisms which lack either or both of asparaginyl-tRNA or glutaminyl-tRNA synthetases. The reaction takes place in the presence of glutamine and ATP through an activated phospho-Asp-tRNA(Asn) or phospho-Glu-tRNA(Gln). This Gluconacetobacter diazotrophicus (strain ATCC 49037 / DSM 5601 / CCUG 37298 / CIP 103539 / LMG 7603 / PAl5) protein is Aspartyl/glutamyl-tRNA(Asn/Gln) amidotransferase subunit C.